Here is a 232-residue protein sequence, read N- to C-terminus: Ubiquitin carboxyl-terminal hydrolase UCHL3 (232 aa).

In terms of domain architecture, UCH catalytic spans 6–225; it reads IWTPLESNPD…LRFSALAVIP (220 aa). An interaction with ubiquitin region spans residues 10 to 14; the sequence is LESNP. Cys92 functions as the Nucleophile in the catalytic mechanism. The crossover loop which restricts access of large ubiquitin adducts to the active site stretch occupies residues 151-159; the sequence is QVENRDDIL. Positions 163–165 are interaction with ubiquitin; sequence THF. The active-site Proton donor is the His164.

It belongs to the peptidase C12 family.

The enzyme catalyses Thiol-dependent hydrolysis of ester, thioester, amide, peptide and isopeptide bonds formed by the C-terminal Gly of ubiquitin (a 76-residue protein attached to proteins as an intracellular targeting signal).. In terms of biological role, thiol protease that recognizes and hydrolyzes a peptide bond at the C-terminal glycine of either ubiquitin or NEDD8. Essential for parasite blood stage survival. This chain is Ubiquitin carboxyl-terminal hydrolase UCHL3, found in Plasmodium falciparum (isolate 3D7).